We begin with the raw amino-acid sequence, 337 residues long: Palmitoyltransferase ZDHHC15 (337 aa).

Residues 1-20 lie on the Cytoplasmic side of the membrane; sequence MRRGWKMALSGGLRCCRRVL. The chain crosses the membrane as a helical span at residues 21-41; sequence SWVPVLVIVLVVLWSYYAYVF. The Lumenal segment spans residues 42–56; sequence ELCLVTVLSPAEKVI. The chain crosses the membrane as a helical span at residues 57 to 77; the sequence is YLILYHAIFVFFTWTYWKSIF. Over 78-172 the chain is Cytoplasmic; that stretch reads TLPQQPNQKF…NNCIGFSNYK (95 aa). One can recognise a DHHC domain in the interval 129–179; the sequence is RFCDRCHLIKPDRCHHCSVCAMCVLKMDHHCPWVNNCIGFSNYKFFLQFLA. 7 residues coordinate Zn(2+): C131, C134, H144, C145, C148, C151, and H158. C159 (S-palmitoyl cysteine intermediate) is an active-site residue. Residue C165 participates in Zn(2+) binding. Residues 173-193 form a helical membrane-spanning segment; sequence FFLQFLAYSVLYCLYIATTVF. Topologically, residues 194–210 are lumenal; it reads SYFIKYWRGELPSVRSK. The helical transmembrane segment at 211–234 threads the bilayer; sequence FHVLFLLFVACMFFVSLVILFGYH. Over 235-337 the chain is Cytoplasmic; it reads CWLVSRNKTT…SSSLAVETET (103 aa). Residues 306 to 337 are disordered; sequence PLLANEETWEDNEDDNQDYPEGSSSLAVETET. Acidic residues predominate over residues 312–323; it reads ETWEDNEDDNQD. Residues 327–337 show a composition bias toward polar residues; sequence GSSSLAVETET.

This sequence belongs to the DHHC palmitoyltransferase family. In terms of processing, autopalmitoylated (in vitro). In terms of tissue distribution, expressed in placenta, liver, lung, kidney, heart and brain.

It is found in the golgi apparatus membrane. The protein localises to the postsynaptic density. It carries out the reaction L-cysteinyl-[protein] + hexadecanoyl-CoA = S-hexadecanoyl-L-cysteinyl-[protein] + CoA. It catalyses the reaction L-cysteinyl-[protein] + tetradecanoyl-CoA = S-tetradecanoyl-L-cysteinyl-[protein] + CoA. The catalysed reaction is L-cysteinyl-[protein] + octadecanoyl-CoA = S-octadecanoyl-L-cysteinyl-[protein] + CoA. In terms of biological role, palmitoyltransferase that catalyzes the addition of palmitate onto various protein substrates. Has no stringent fatty acid selectivity and in addition to palmitate can also transfer onto target proteins myristate from tetradecanoyl-CoA and stearate from octadecanoyl-CoA. Palmitoylates IGF2R and SORT1, promoting their partitioning to an endosomal membrane subdomain where they can interact with the retromer cargo-selective complex. Thereby, regulates retrograde transport from endosomes to the Golgi apparatus of these lysosomal sorting receptors and plays a role in trafficking of lysosomal proteins. In the nervous system, catalyzes the palmitoylation of DLG4/PSD95 and regulates its synaptic clustering and function in synaptogenesis. Could be involved in the differentiation of dopaminergic neurons and the development of the diencephalon. Could also catalyze the palmitoylation of GAP43. Could also palmitoylate DNAJC5 and regulate its localization to the Golgi membrane. Could also palmitoylate FYN as shown in vitro. May palmitoylate CALHM3 subunit of gustatory voltage-gated ion channels and modulate channel gating and kinetics. This Homo sapiens (Human) protein is Palmitoyltransferase ZDHHC15.